The following is a 240-amino-acid chain: Phosphoribosylaminoimidazole-succinocarboxamide synthase (240 aa).

This sequence belongs to the SAICAR synthetase family.

The enzyme catalyses 5-amino-1-(5-phospho-D-ribosyl)imidazole-4-carboxylate + L-aspartate + ATP = (2S)-2-[5-amino-1-(5-phospho-beta-D-ribosyl)imidazole-4-carboxamido]succinate + ADP + phosphate + 2 H(+). Its pathway is purine metabolism; IMP biosynthesis via de novo pathway; 5-amino-1-(5-phospho-D-ribosyl)imidazole-4-carboxamide from 5-amino-1-(5-phospho-D-ribosyl)imidazole-4-carboxylate: step 1/2. The chain is Phosphoribosylaminoimidazole-succinocarboxamide synthase from Acidithiobacillus ferrooxidans (strain ATCC 23270 / DSM 14882 / CIP 104768 / NCIMB 8455) (Ferrobacillus ferrooxidans (strain ATCC 23270)).